Here is a 192-residue protein sequence, read N- to C-terminus: MAQMYFYYSAMNAGKSTTLLQSSFNYQERGMNPAIFTAAIDDRYGVGKVSSRIGLHAEAHLFNKETNVFDAIKELHEAEKLHCVLIDECQFLTKEQVYQLTEVVDKLNIPALCYGLRTDFLGELFEGSKYLLSWADKLVELKTICHCGRKANMVIRTDEHGVAIADGDQVAIGGNELYVSVCRRHYKEALGK.

Residues 9–16 (SAMNAGKS) and 87–90 (DECQ) each bind ATP. E88 (proton acceptor) is an active-site residue. 4 residues coordinate Zn(2+): C145, C147, C182, and H185.

Belongs to the thymidine kinase family. As to quaternary structure, homotetramer.

It is found in the cytoplasm. The catalysed reaction is thymidine + ATP = dTMP + ADP + H(+). This is Thymidine kinase from Aliivibrio fischeri (strain ATCC 700601 / ES114) (Vibrio fischeri).